A 148-amino-acid chain; its full sequence is Thioredoxin H8 (148 aa).

Positions 1–145 constitute a Thioredoxin domain; the sequence is MGANVSTPDQ…LERKLNKYTQ (145 aa). Active-site nucleophile residues include cysteine 71 and cysteine 74. A disulfide bridge connects residues cysteine 71 and cysteine 74.

This sequence belongs to the thioredoxin family. Plant H-type subfamily.

The protein localises to the cytoplasm. Functionally, probable thiol-disulfide oxidoreductase that may be involved in the redox regulation of a number of cytosolic enzymes. This chain is Thioredoxin H8 (TRX8), found in Arabidopsis thaliana (Mouse-ear cress).